A 243-amino-acid chain; its full sequence is Tryptophan synthase alpha chain (243 aa).

Active-site proton acceptor residues include glutamate 31 and aspartate 42.

The protein belongs to the TrpA family. In terms of assembly, tetramer of two alpha and two beta chains.

The catalysed reaction is (1S,2R)-1-C-(indol-3-yl)glycerol 3-phosphate + L-serine = D-glyceraldehyde 3-phosphate + L-tryptophan + H2O. Its pathway is amino-acid biosynthesis; L-tryptophan biosynthesis; L-tryptophan from chorismate: step 5/5. Its function is as follows. The alpha subunit is responsible for the aldol cleavage of indoleglycerol phosphate to indole and glyceraldehyde 3-phosphate. The protein is Tryptophan synthase alpha chain of Staphylococcus epidermidis (strain ATCC 35984 / DSM 28319 / BCRC 17069 / CCUG 31568 / BM 3577 / RP62A).